A 98-amino-acid chain; its full sequence is Large ribosomal subunit protein uL23 (98 aa).

It belongs to the universal ribosomal protein uL23 family. Part of the 50S ribosomal subunit. Contacts protein L29, and trigger factor when it is bound to the ribosome.

In terms of biological role, one of the early assembly proteins it binds 23S rRNA. One of the proteins that surrounds the polypeptide exit tunnel on the outside of the ribosome. Forms the main docking site for trigger factor binding to the ribosome. The polypeptide is Large ribosomal subunit protein uL23 (Clostridium acetobutylicum (strain ATCC 824 / DSM 792 / JCM 1419 / IAM 19013 / LMG 5710 / NBRC 13948 / NRRL B-527 / VKM B-1787 / 2291 / W)).